The chain runs to 547 residues: Chaperonin GroEL (547 aa).

ATP contacts are provided by residues 29–32 (TLGP), 86–90 (DGTTT), Gly413, 478–480 (DVL), and Asp494.

The protein belongs to the chaperonin (HSP60) family. As to quaternary structure, forms a cylinder of 14 subunits composed of two heptameric rings stacked back-to-back. Interacts with the co-chaperonin GroES.

The protein resides in the cytoplasm. The enzyme catalyses ATP + H2O + a folded polypeptide = ADP + phosphate + an unfolded polypeptide.. Its function is as follows. Together with its co-chaperonin GroES, plays an essential role in assisting protein folding. The GroEL-GroES system forms a nano-cage that allows encapsulation of the non-native substrate proteins and provides a physical environment optimized to promote and accelerate protein folding. This is Chaperonin GroEL from Alkaliphilus metalliredigens (strain QYMF).